Consider the following 251-residue polypeptide: DNA repair protein RecO (251 aa).

This sequence belongs to the RecO family.

In terms of biological role, involved in DNA repair and RecF pathway recombination. The chain is DNA repair protein RecO from Lactococcus lactis subsp. cremoris (strain MG1363).